We begin with the raw amino-acid sequence, 1358 residues long: DNA-directed RNA polymerase subunit beta (1358 aa).

The protein belongs to the RNA polymerase beta chain family. As to quaternary structure, the RNAP catalytic core consists of 2 alpha, 1 beta, 1 beta' and 1 omega subunit. When a sigma factor is associated with the core the holoenzyme is formed, which can initiate transcription.

It catalyses the reaction RNA(n) + a ribonucleoside 5'-triphosphate = RNA(n+1) + diphosphate. Its function is as follows. DNA-dependent RNA polymerase catalyzes the transcription of DNA into RNA using the four ribonucleoside triphosphates as substrates. The polypeptide is DNA-directed RNA polymerase subunit beta (Xanthobacter autotrophicus (strain ATCC BAA-1158 / Py2)).